Here is a 416-residue protein sequence, read N- to C-terminus: Tiggy-winkle hedgehog protein (416 aa).

A signal peptide spans 1–26; it reads MDVRLHLKQFALLCFISLLLTPCGLA. Cys27 is lipidated: N-palmitoyl cysteine. Ca(2+) contacts are provided by Glu92, Glu93, Asp98, Thr128, Glu129, Asp132, and Asp134. Residues His143, Asp150, and His185 each contribute to the Zn(2+) site. A lipid anchor (Cholesterol glycine ester) is attached at Gly200.

The protein belongs to the hedgehog family. As to quaternary structure, multimer. Interacts with HHATL/GUP1 which negatively regulates HHAT-mediated palmitoylation of the TWHH N-terminus. Interacts with BOC and CDON. Interacts with HHIP. Interacts with DISP1 via its cholesterol anchor. Interacts with SCUBE2. The C-terminal domain displays an autoproteolysis activity and a cholesterol transferase activity. Both activities result in the cleavage of the full-length protein into two parts (N-product and C-product) followed by the covalent attachment of a cholesterol moiety to the C-terminal of the newly generated N-product. Cholesterylation is required for the tiggy-winkle hedgehog protein N-product targeting to lipid rafts and multimerization. N-product is the active species in both local and long-range signaling, whereas the C-product is degraded in the endoplasmic reticulum. In terms of processing, N-palmitoylation by HHAT of N-product is required for tiggy-winkle hedgehog protein N-product multimerization and full activity. It is a prerequisite for the membrane-proximal positioning and the subsequent shedding of this N-terminal peptide. Post-translationally, the lipidated N- and C-terminal peptides of N-product can be cleaved (shedding). The N-terminal palmitoylated peptide is cleaved at the Cardin-Weintraub (CW) motif site. The cleavage reduced the interactions with heparan sulfate. The cleavage is enhanced by SCUBE2. In terms of tissue distribution, expressed in the ventral midline of the neural tube and brain. In the developing brain, expression occurs in domains that include a discrete region in the floor of the diencephalon. Not detected in the notochord or developing fin bud.

The protein resides in the cell membrane. It localises to the endoplasmic reticulum membrane. It is found in the golgi apparatus membrane. In terms of biological role, the C-terminal part of the tiggy-winkle hedgehog protein precursor displays an autoproteolysis and a cholesterol transferase activity. Both activities result in the cleavage of the full-length protein into two parts (N-product and C-product) followed by the covalent attachment of a cholesterol moiety to the C-terminal of the newly generated N-product. Both activities occur in the endoplasmic reticulum. Once cleaved, the C-product is degraded in the endoplasmic reticulum. The dually lipidated tiggy-winkle hedgehog protein N-product is a morphogen which is essential for a variety of patterning events during development. Involved in dorso-ventral patterning of the brain and in early patterning of the developing eyes. Binds to the patched (PTCH1) receptor, which functions in association with smoothened (SMO), to activate the transcription of target genes. This Danio rerio (Zebrafish) protein is Tiggy-winkle hedgehog protein (shhb).